Consider the following 53-residue polypeptide: Sec-independent protein translocase protein TatA (53 aa).

A helical transmembrane segment spans residues Met1–Ala21.

This sequence belongs to the TatA/E family. In terms of assembly, the Tat system comprises two distinct complexes: a TatABC complex, containing multiple copies of TatA, TatB and TatC subunits, and a separate TatA complex, containing only TatA subunits. Substrates initially bind to the TatABC complex, which probably triggers association of the separate TatA complex to form the active translocon.

Its subcellular location is the cell inner membrane. Part of the twin-arginine translocation (Tat) system that transports large folded proteins containing a characteristic twin-arginine motif in their signal peptide across membranes. TatA could form the protein-conducting channel of the Tat system. The chain is Sec-independent protein translocase protein TatA from Rickettsia typhi (strain ATCC VR-144 / Wilmington).